The chain runs to 1400 residues: DNA-directed RNA polymerase subunit beta' (1400 aa).

Positions 71, 73, 86, and 89 each coordinate Zn(2+). Residues D462, D464, and D466 each contribute to the Mg(2+) site. Residues C811, C885, C892, and C895 each coordinate Zn(2+).

The protein belongs to the RNA polymerase beta' chain family. The RNAP catalytic core consists of 2 alpha, 1 beta, 1 beta' and 1 omega subunit. When a sigma factor is associated with the core the holoenzyme is formed, which can initiate transcription. The cofactor is Mg(2+). Zn(2+) serves as cofactor.

It carries out the reaction RNA(n) + a ribonucleoside 5'-triphosphate = RNA(n+1) + diphosphate. In terms of biological role, DNA-dependent RNA polymerase catalyzes the transcription of DNA into RNA using the four ribonucleoside triphosphates as substrates. This is DNA-directed RNA polymerase subunit beta' from Brucella ovis (strain ATCC 25840 / 63/290 / NCTC 10512).